The sequence spans 151 residues: Transcriptional repressor NrdR (151 aa).

A zinc finger lies at 3 to 34; it reads CPFCSHPDTQVVETREAEDGGFIRRRRQCGGC. Residues 49 to 139 form the ATP-cone domain; the sequence is PAIVKKDGRR…VYRSFEDVDD (91 aa).

Belongs to the NrdR family. Zn(2+) serves as cofactor.

Negatively regulates transcription of bacterial ribonucleotide reductase nrd genes and operons by binding to NrdR-boxes. The chain is Transcriptional repressor NrdR from Delftia acidovorans (strain DSM 14801 / SPH-1).